The sequence spans 204 residues: Lipoprotein signal peptidase (204 aa).

Positions 1 to 42 (MAEAERIIGTPDIPDAAGEGQERPDADPEREQQEQEQAPERT) are disordered. The span at 20-42 (GQERPDADPEREQQEQEQAPERT) shows a compositional bias: basic and acidic residues. 3 consecutive transmembrane segments (helical) span residues 50–70 (VLFA…MLVV), 100–120 (FGEA…VVIA), and 126–146 (LHSL…LGNL). Catalysis depends on residues Asp163 and Asp177. A helical membrane pass occupies residues 170–190 (FAVFNLADSAIVCGGILIVIL).

This sequence belongs to the peptidase A8 family.

The protein resides in the cell membrane. The enzyme catalyses Release of signal peptides from bacterial membrane prolipoproteins. Hydrolyzes -Xaa-Yaa-Zaa-|-(S,diacylglyceryl)Cys-, in which Xaa is hydrophobic (preferably Leu), and Yaa (Ala or Ser) and Zaa (Gly or Ala) have small, neutral side chains.. It functions in the pathway protein modification; lipoprotein biosynthesis (signal peptide cleavage). Functionally, this protein specifically catalyzes the removal of signal peptides from prolipoproteins. This Streptomyces coelicolor (strain ATCC BAA-471 / A3(2) / M145) protein is Lipoprotein signal peptidase.